We begin with the raw amino-acid sequence, 1165 residues long: MEPITFTARKHPFPNEVSVDFGLQLVGSLPVHSLTTMPMLPWVVAEVRRLSGQSSKKEPGTKPVRLCVSPSGLRCEPEPGKSQQWDPLICSSIFECKPQRVHKLIHNSHDPSYFACLIKNDAANQQSICYVFKADDQTKVPEIISSIRQAGKIARQEELRCPSEFDDTFAKKFEVLFCGRVAVAHRKAPPALIDECIEGFSHVSGGFSSDQSRSALQPPGDGERGPRPMRKSFSQPGLRSLAFRKEFQDAGLRSSSFFSSFEESDIENHLISGHNIVQPTDIEENRTMLFTIGQSEVYLISPDTKKIALQKNFKEISFCSQGIRHVDHFGFICRESSGGGGFHFVCYVFQCTNEALVDEIMMTLKQAFTVAAVQQTAKAPAQLCEGCPLQGLHKLCERIEGMNSSKTKLELQKHLTTLTNQEQATIFEEVQKLRPRNEQRENELIISFLRCLYEEKQKVHIHIGEIKQTSQIAAENIGSELPSSATRFRLDMLKNKAKRSLTESLESILSRGNKARGLQEHSASLDLDSSVSSMFSNTSKEPSGYEKEALPISESCFRLLGSSDDLSSDSESQLTEEPALLSPKQGFRRRANTLSHVPVECQEPPQLVRGSPGVSQRKLVRYHSVSTETPHERKDFESKADHISDASRTPVKTRRHSWRQQIFLRVATPQKACESPKRYEDYSELGELPPRSPLEPVCEDGPFGPVPEEKKRTSHELRELWQKAILQQILLLRMEKENQKLQASENDLLNKRLKLDYEEITPCLKEVTTVWEKILSTPGRSKIKFDMEKMHSAVGQGVPRHHRGEIWKFLAEQYHLKHPFPCKQQPKDTPYKELLKQLTSQQHAILIDLGRTFPTHPYYSAQLGAGQLSLYNILKAYSLLDQEVGYCQGLSFVAGILLLHMGEEEAFNMLKFLMFDMGLRKQYRPDMIILQIQMYQLSRLLHDYHRDLYNHLEEHEIGPSLYAAPWFLTVFASQFPLGFVARVFDMIFLQGSEVIFKVALSLLGSHKPLILQHENLETIVDFIKSTLPNLGLVQMEKTISQVFETDISKQLQAYEVEYHVLQEELIDSSPLSDNQRMDKLEKTNSSLRKQNLDLLEQLQVANGRIQSLEATVEKLLTSESKLKQATLALELERSALLQTVEQLRRQTAELGSQESDPTLPKPSGD.

Ser-146 is subject to Phosphoserine. Residues 207 to 234 (FSSDQSRSALQPPGDGERGPRPMRKSFS) are disordered. The residue at position 232 (Ser-232) is a Phosphoserine; by PKB/AKT1. Ser-234 is subject to Phosphoserine; by AMPK. The PID domain occupies 243–401 (FRKEFQDAGL…LHKLCERIEG (159 aa)). Ser-500 carries the phosphoserine modification. Thr-502 bears the Phosphothreonine; by PKB/AKT1 mark. Residues Ser-504, Ser-522, Ser-524, Ser-562, Ser-563, Ser-567, Ser-568, and Ser-582 each carry the phosphoserine modification. Position 593 is a phosphothreonine (Thr-593). Ser-611 is subject to Phosphoserine. Ser-624 bears the Phosphoserine; by PKB/AKT1 mark. Residues 624-651 (SVSTETPHERKDFESKADHISDASRTPV) are disordered. The segment covering 629–645 (TPHERKDFESKADHISD) has biased composition (basic and acidic residues). Residues Ser-692 and Ser-938 each carry the phosphoserine modification. A Rab-GAP TBC domain is found at 797 to 991 (GVPRHHRGEI…RVFDMIFLQG (195 aa)). Tyr-949 is subject to Phosphotyrosine. The segment at 1146–1165 (QTAELGSQESDPTLPKPSGD) is disordered.

Interacts with APPL2 (via BAR domain); interaction is dependent of TBC1D1 phosphorylation at Ser-232; interaction diminishes the phosphorylation of TBC1D1 at Thr-593, resulting in inhibition of SLC2A4/GLUT4 translocation and glucose uptake. Post-translationally, insulin-stimulated phosphorylation by AKT family kinases stimulates SLC2A4/GLUT4 translocation.

The protein localises to the nucleus. Its function is as follows. May act as a GTPase-activating protein for Rab family protein(s). May play a role in the cell cycle and differentiation of various tissues. Involved in the trafficking and translocation of GLUT4-containing vesicles and insulin-stimulated glucose uptake into cells. This chain is TBC1 domain family member 1 (TBC1D1), found in Bos taurus (Bovine).